The primary structure comprises 131 residues: Histone H2A.1 (131 aa).

S2 carries the N-acetylserine modification. N6-acetyllysine is present on residues K4 and K7. At Q105 the chain carries N5-methylglutamine. Residue K126 forms a Glycyl lysine isopeptide (Lys-Gly) (interchain with G-Cter in SUMO) linkage. S128 is subject to Phosphoserine. The short motif at 128-129 (SQ) is the [ST]-Q motif element.

The protein belongs to the histone H2A family. As to quaternary structure, the nucleosome is a histone octamer containing two molecules each of H2A, H2B, H3 and H4 assembled in one H3-H4 heterotetramer and two H2A-H2B heterodimers. The octamer wraps approximately 147 bp of DNA. In terms of processing, phosphorylated to form H2AS128ph (gamma-H2A) in response to DNA double-strand breaks (DSBs) generated by exogenous genotoxic agents and by stalled replication forks. Phosphorylation is dependent on the DNA damage checkpoint kinases MEC1/ATR and TEL1/ATM, spreads on either side of a detected DSB site and may mark the surrounding chromatin for recruitment of proteins required for DNA damage signaling and repair. Gamma-H2A is removed from the DNA prior to the strand invasion-primer extension step of the repair process and subsequently dephosphorylated by PPH3, a component of the histone H2A phosphatase complex (HTP-C). Dephosphorylation is necessary for efficient recovery from the DNA damage checkpoint. Sumoylation on Lys-126 may lead to transcriptional repression. Post-translationally, acetylated by ESA1 to form H2AK4ac and H2AK7ac.

It is found in the nucleus. It localises to the chromosome. Its function is as follows. Core component of nucleosome which plays a central role in DNA double strand break (DSB) repair. Nucleosomes wrap and compact DNA into chromatin, limiting DNA accessibility to the cellular machineries which require DNA as a template. Histones thereby play a central role in transcription regulation, DNA repair, DNA replication and chromosomal stability. DNA accessibility is regulated via a complex set of post-translational modifications of histones, also called histone code, and nucleosome remodeling. In Eremothecium gossypii (strain ATCC 10895 / CBS 109.51 / FGSC 9923 / NRRL Y-1056) (Yeast), this protein is Histone H2A.1 (HTA1).